A 295-amino-acid chain; its full sequence is Putative clathrin assembly protein At5g65370 (295 aa).

The ENTH domain maps to 26-169; the sequence is CSSVNAKTID…SIAEVLGITP (144 aa).

The protein resides in the membrane. It localises to the clathrin-coated pit. Its subcellular location is the golgi apparatus. The protein localises to the cytoplasmic vesicle. It is found in the clathrin-coated vesicle. This is Putative clathrin assembly protein At5g65370 from Arabidopsis thaliana (Mouse-ear cress).